We begin with the raw amino-acid sequence, 271 residues long: Adenosylcobinamide-GDP ribazoletransferase (271 aa).

The next 7 helical transmembrane spans lie at 4–24, 35–55, 58–78, 108–128, 135–155, 192–212, and 246–266; these read FLLA…GMSM, YLQT…AYLT, FLPS…ITGL, SLGI…YASI, VLFF…IAEI, FVLG…IGYI, and IIVL…YGGL.

Belongs to the CobS family. Mg(2+) is required as a cofactor.

Its subcellular location is the cell membrane. The enzyme catalyses alpha-ribazole + adenosylcob(III)inamide-GDP = adenosylcob(III)alamin + GMP + H(+). The catalysed reaction is alpha-ribazole 5'-phosphate + adenosylcob(III)inamide-GDP = adenosylcob(III)alamin 5'-phosphate + GMP + H(+). The protein operates within cofactor biosynthesis; adenosylcobalamin biosynthesis; adenosylcobalamin from cob(II)yrinate a,c-diamide: step 7/7. Functionally, joins adenosylcobinamide-GDP and alpha-ribazole to generate adenosylcobalamin (Ado-cobalamin). Also synthesizes adenosylcobalamin 5'-phosphate from adenosylcobinamide-GDP and alpha-ribazole 5'-phosphate. In Methanococcoides burtonii (strain DSM 6242 / NBRC 107633 / OCM 468 / ACE-M), this protein is Adenosylcobinamide-GDP ribazoletransferase.